A 589-amino-acid polypeptide reads, in one-letter code: Protein FAM161B (589 aa).

Disordered stretches follow at residues 1–166, 265–297, and 386–444; these read MTVG…VCSW, KKEQ…RKIP, and AERR…GLAS. A compositionally biased stretch (acidic residues) spans 92–106; the sequence is PDSDLNDAEDEEDLE. Positions 151 to 166 are enriched in polar residues; the sequence is TSDSGPPSQHRSVCSW. The span at 265-275 shows a compositional bias: basic and acidic residues; that stretch reads KKEQQKEDAPQ. The segment covering 287-297 has biased composition (basic residues); it reads SPKKATSRKIP. A compositionally biased stretch (basic and acidic residues) spans 386-396; the sequence is AERRETRETTR. Residues 510-577 are a coiled coil; the sequence is EEVFKAKLKE…ALKQAGLEEE (68 aa).

It belongs to the FAM161 family. In terms of assembly, interacts with FAM161A.

The polypeptide is Protein FAM161B (Fam161b) (Mus musculus (Mouse)).